The following is a 484-amino-acid chain: GRIP domain-containing protein RUD3 (484 aa).

Residues 1 to 15 (MGKNKKKTGKKAKSH) are compositionally biased toward basic residues. Residues 1-75 (MGKNKKKTGK…GVDKQKVNDG (75 aa)) form a disordered region. The segment covering 16-30 (PHVEDVDETVNKPEE) has biased composition (basic and acidic residues). Serine 55 and serine 64 each carry phosphoserine. Basic and acidic residues predominate over residues 61–72 (KDLSEGVDKQKV). Residues 84 to 383 (LEDKKAGDEM…LQIGKLRHEA (300 aa)) adopt a coiled-coil conformation. The GRIP domain occupies 401–452 (SDSESVDKELISNLLISFVSIPRADPRKFEVLELLSNFLNWDEDKKQQAGLI). Serine 468 carries the post-translational modification Phosphoserine.

Its subcellular location is the golgi apparatus lumen. Its function is as follows. Involved in the structural organization of the cis-Golgi and in vesicle targeting/fusion stages of ER to Golgi transport. This is GRIP domain-containing protein RUD3 (RUD3) from Saccharomyces cerevisiae (strain ATCC 204508 / S288c) (Baker's yeast).